Consider the following 999-residue polypeptide: Ulvan lyase, long isoform (999 aa).

The first 21 residues, 1–21, serve as a signal peptide directing secretion; sequence MKCLKTLLVSTTLLGAFSLNA. Substrate is bound at residue 126–127; that stretch reads SH. Histidine 127 acts as the Proton donor/acceptor in catalysis. Ca(2+) is bound by residues aspartate 189, aspartate 199, and lysine 201. Substrate-binding residues include tyrosine 280 and arginine 297. 3 residues coordinate Ca(2+): aspartate 300, aspartate 303, and tyrosine 305. Tyrosine 361 is a binding site for substrate.

This sequence belongs to the polysaccharide lyase 24 family.

Its function is as follows. Ulvan lyase involved in ulvan degradation. Ulvan is the main polysaccharide component of the Ulvales (green seaweed) cell wall. It is composed of disaccharide building blocks comprising 3-sulfated rhamnose (Rha3S) linked to D-glucuronic acid (GlcA), L-iduronic acid (IduA), or D-xylose (Xyl). Ulvan lyase catalyzes preferentially the endolytic cleavage of the glycosidic bond between Rha3S and the uronic acid GlcA, but not IduA, producing oligosaccharides that have unsaturated 4-deoxy-L-threo-hex-4-enopyranosiduronic acid (deltaUA) at the non-reducing end. The most abundant end products in the degradation of the ulvan polysaccharide were deltaUA-Rha3S disaccharides and deltaUA-Rha3S-IduA-Rha3S and deltaUA-Rha3S-Xyl-Rha3S tetrasaccharides. The polypeptide is Ulvan lyase, long isoform (Alteromonas sp).